The following is a 256-amino-acid chain: Dihydromonacolin L-[lovastatin nonaketide synthase] thioesterase (256 aa).

Active-site charge relay system residues include Ser122, Asp201, and His229.

Belongs to the LovG family.

It carries out the reaction dihydromonacolin L-[lovastatin nonaketide synthase] + H2O = holo-[lovastatin nonaketide synthase] + dihydromonacolin L carboxylate + H(+). It participates in polyketide biosynthesis; lovastatin biosynthesis. Esterase; part of the gene cluster that mediates the biosynthesis of lovastatin (also known as mevinolin, mevacor or monacolin K), a hypolipidemic inhibitor of (3S)-hydroxymethylglutaryl-coenzyme A (HMG-CoA) reductase (HMGR). The first step in the biosynthesis of lovastatin is the production of dihydromonacolin L acid by the lovastatin nonaketide synthase lovB and the trans-acting enoyl reductase lovC via condensation of one acetyl-CoA unit and 8 malonyl-CoA units. Dihydromonacolin L acid is released from lovB by the thioesterase lovG. Next, dihydromonacolin L acid is oxidized by the dihydromonacolin L monooxygenase lovA twice to form monacolin J acid. The 2-methylbutyrate moiety of lovastatin is synthesized by the lovastatin diketide synthase lovF via condensation of one acetyl-CoA unit and one malonyl-CoA unit. Finally, the covalent attachment of this moiety to monacolin J acid is catalyzed by the transesterase lovD to yield lovastatin. LovD has broad substrate specificity and can also convert monacolin J to simvastatin using alpha-dimethylbutanoyl-S-methyl-3-mercaptopropionate (DMB-S-MMP) as the thioester acyl donor, and can also catalyze the reverse reaction and function as hydrolase in vitro. LovD has much higher activity with LovF-bound 2-methylbutanoate than with free diketide substrates. Functionally, esterase that catalyzes the release of covalently bound dihydromonacolin L from LovB during lovastatin biosynthesis. This Aspergillus terreus protein is Dihydromonacolin L-[lovastatin nonaketide synthase] thioesterase.